We begin with the raw amino-acid sequence, 581 residues long: Ras-specific guanine nucleotide-releasing factor RalGPS1 (581 aa).

The segment at 1–31 (MYRRNGLPASVSITSRNTQDSSSSESLDGRS) is disordered. One can recognise a Ras-GEF domain in the interval 49 to 288 (TPEEFASQIT…YSLSLKIEPG (240 aa)). The tract at residues 320-339 (PDTSVVAHLPTPPPARHRKS) is disordered. The PXXP signature appears at 329–332 (PTPP). The 113-residue stretch at 455 to 567 (SITIEGPLRR…WHRHLAEACR (113 aa)) folds into the PH domain.

The protein resides in the cytoplasm. Its subcellular location is the cell membrane. Guanine nucleotide exchange factor. May be involved in cytoskeletal organization. The protein is Ras-specific guanine nucleotide-releasing factor RalGPS1 (ralgps1) of Danio rerio (Zebrafish).